The sequence spans 347 residues: Melanoma-associated antigen B10 (347 aa).

Residues 1–18 (MPRGQKSKLRAREKRRQA) show a composition bias toward basic residues. Disordered stretches follow at residues 1–20 (MPRG…QARG) and 56–92 (GASN…QMEE). The span at 67–78 (AQSTSTSATAAS) shows a compositional bias: low complexity. Residues 81–92 (RHPEGVNDQMEE) show a composition bias toward basic and acidic residues. The MAGE domain occupies 111-310 (VDEKVIILVH…SEFSNWYTEA (200 aa)). The disordered stretch occupies residues 328–347 (VSATAGARSKVKSSKSSQLQ).

This Homo sapiens (Human) protein is Melanoma-associated antigen B10 (MAGEB10).